Here is a 305-residue protein sequence, read N- to C-terminus: tRNA dimethylallyltransferase (305 aa).

An ATP-binding site is contributed by 13–20; the sequence is GPTSSGKT. 15–20 is a binding site for substrate; it reads TSSGKT. Residues 39–42 are interaction with substrate tRNA; it reads DSKQ.

This sequence belongs to the IPP transferase family. Monomer. Mg(2+) serves as cofactor.

The catalysed reaction is adenosine(37) in tRNA + dimethylallyl diphosphate = N(6)-dimethylallyladenosine(37) in tRNA + diphosphate. Functionally, catalyzes the transfer of a dimethylallyl group onto the adenine at position 37 in tRNAs that read codons beginning with uridine, leading to the formation of N6-(dimethylallyl)adenosine (i(6)A). This is tRNA dimethylallyltransferase from Neorickettsia sennetsu (strain ATCC VR-367 / Miyayama) (Ehrlichia sennetsu).